The primary structure comprises 382 residues: Opsin Rh3 (382 aa).

The Extracellular portion of the chain corresponds to 1 to 56 (MEYHNVSSVLGNVSSVLRPDARLSAESRLLGWNVPPDELRHIPEHWLIYPEPPESM). An N-linked (GlcNAc...) asparagine glycan is attached at Asn12. Residues 57–81 (NYLLGTLYIFFTVISMIGNGLVMWV) traverse the membrane as a helical segment. Over 82 to 93 (FSAAKSLRTPSN) the chain is Cytoplasmic. A helical transmembrane segment spans residues 94 to 118 (ILVINLAFCDFMMMIKTPIFIYNSF). Over 119–132 (HQGYALGHLGCQIF) the chain is Extracellular. Cys129 and Cys206 are disulfide-bonded. Residues 133–152 (GVIGSYTGIAAGATNAFIAY) traverse the membrane as a helical segment. Residues 153–170 (DRYNVITRPMEGKMTHGK) lie on the Cytoplasmic side of the membrane. The chain crosses the membrane as a helical span at residues 171 to 195 (AIAMIIFIYLYATPWVVACYTESWG). At 196-219 (RFVPEGYLTSCTFDYLTDNFDTRL) the chain is on the extracellular side. The helical transmembrane segment at 220–247 (FVACIFFFSFVCPTTMITYYYSQIVGHV) threads the bilayer. Over 248-283 (FSHEKALRDQAKKMNVDSLRSNVDKSKEAAEIRIAK) the chain is Cytoplasmic. A helical transmembrane segment spans residues 284 to 307 (AAITICFLFFASWTPYGVMSLIGA). The Extracellular segment spans residues 308-315 (FGDKTLLT). A helical membrane pass occupies residues 316 to 340 (PGATMIPACTCKMVACIDPFVYAIS). At Lys327 the chain carries N6-(retinylidene)lysine. Residues 341–382 (HPRYRMELQKRCPWLAISEKAPESAAAISTSTTQEQQQTTAA) lie on the Cytoplasmic side of the membrane.

This sequence belongs to the G-protein coupled receptor 1 family. Opsin subfamily. Phosphorylated on some or all of the serine and threonine residues present in the C-terminal region.

It is found in the membrane. Its function is as follows. Visual pigments are the light-absorbing molecules that mediate vision. They consist of an apoprotein, opsin, covalently linked to cis-retinal. The chain is Opsin Rh3 (Rh3) from Drosophila pseudoobscura pseudoobscura (Fruit fly).